The sequence spans 379 residues: MSRSGTDPQQRQQASEADAAAATFRANDHQHIRYNPLQDEWVLVSAHRMKRPWQGQVEPQLLKTVPRHDPLNPLCPGAIRANGEVNPQYDSTFLFDNDFPALQPDAPSPGPSDHPLFQAKSARGVCKVMCFHPWSDVTLPLMSVPEIRAVVDAWASVTEELGAQYPWVQIFENKGAMMGCSNPHPHCQVWASSFLPDIAQREERSQQAYKSQHGEPLLMEYSRQELLRKERLVLTSEHWLVLVPFWATWPYQTLLLPRRHVRRLPELTPAERDDLASIMKKLLTKYDNLFETSFPYSMGWHGAPTGSEAGANWNHWQLHAHYYPPLLRSATVRKFMVGYEMLAQAQRDLTPEQAAERLRALPEVHYHLGQKDRETATIA.

The segment at M1–A21 is disordered. Low complexity predominate over residues Q9–A21. Residue C75 coordinates Zn(2+). Residues A81, N97–D98, and N173 each bind UDP-alpha-D-glucose. H184 is a Zn(2+) binding site. The Tele-UMP-histidine intermediate role is filled by H186. Q188 contributes to the UDP-alpha-D-glucose binding site. Positions 202, 301, 319, and 321 each coordinate Zn(2+). Residues K334–V337 and Y339–E340 each bind UDP-alpha-D-glucose.

It belongs to the galactose-1-phosphate uridylyltransferase type 1 family. In terms of assembly, homodimer. Zn(2+) is required as a cofactor.

It carries out the reaction alpha-D-galactose 1-phosphate + UDP-alpha-D-glucose = alpha-D-glucose 1-phosphate + UDP-alpha-D-galactose. It participates in carbohydrate metabolism; galactose metabolism. In terms of biological role, plays an important role in galactose metabolism. In Homo sapiens (Human), this protein is Galactose-1-phosphate uridylyltransferase (GALT).